Consider the following 431-residue polypeptide: Histidine--tRNA ligase (431 aa).

The protein belongs to the class-II aminoacyl-tRNA synthetase family.

Its subcellular location is the cytoplasm. It carries out the reaction tRNA(His) + L-histidine + ATP = L-histidyl-tRNA(His) + AMP + diphosphate + H(+). In Pyrococcus horikoshii (strain ATCC 700860 / DSM 12428 / JCM 9974 / NBRC 100139 / OT-3), this protein is Histidine--tRNA ligase (hisS).